The primary structure comprises 264 residues: Triosephosphate isomerase (264 aa).

Residue 12–14 participates in substrate binding; sequence NWK. His-104 (electrophile) is an active-site residue. The active-site Proton acceptor is the Glu-176. Substrate contacts are provided by residues Gly-182, Ser-222, and 243-244; that span reads GG.

It belongs to the triosephosphate isomerase family. As to quaternary structure, homodimer.

The protein resides in the cytoplasm. It carries out the reaction D-glyceraldehyde 3-phosphate = dihydroxyacetone phosphate. It participates in carbohydrate biosynthesis; gluconeogenesis. It functions in the pathway carbohydrate degradation; glycolysis; D-glyceraldehyde 3-phosphate from glycerone phosphate: step 1/1. Its function is as follows. Involved in the gluconeogenesis. Catalyzes stereospecifically the conversion of dihydroxyacetone phosphate (DHAP) to D-glyceraldehyde-3-phosphate (G3P). This is Triosephosphate isomerase from Bifidobacterium adolescentis (strain ATCC 15703 / DSM 20083 / NCTC 11814 / E194a).